A 296-amino-acid chain; its full sequence is Nucleotide-binding protein Pnuc_1915 (296 aa).

8-15 provides a ligand contact to ATP; it reads GISGSGKS. 57–60 is a binding site for GTP; that stretch reads DARR.

It belongs to the RapZ-like family.

Its function is as follows. Displays ATPase and GTPase activities. This chain is Nucleotide-binding protein Pnuc_1915, found in Polynucleobacter asymbioticus (strain DSM 18221 / CIP 109841 / QLW-P1DMWA-1) (Polynucleobacter necessarius subsp. asymbioticus).